The primary structure comprises 255 residues: Cytochrome b561 and DOMON domain-containing protein At5g48750 (255 aa).

Positions 1 to 27 (MFLSSRTIFVGLCFLFVLAPCFTRATT) are cleaved as a signal peptide. Residues 54 to 169 (LDSFLHYSYV…TVVNHLWQDG (116 aa)) enclose the DOMON domain. The 80-residue stretch at 176 to 255 (RLGMHAMSGN…DPTWFYILIL (80 aa)) folds into the Cytochrome b561 domain. The chain crosses the membrane as a helical span at residues 216–236 (IHGLVNAVCWGIFIPIGVMAA).

It is found in the membrane. The polypeptide is Cytochrome b561 and DOMON domain-containing protein At5g48750 (Arabidopsis thaliana (Mouse-ear cress)).